We begin with the raw amino-acid sequence, 440 residues long: COP9 signalosome complex subunit 5 (440 aa).

The MPN domain maps to 71 to 218 (VLISKLSCEK…MGAFRTIESK (148 aa)). Zn(2+) contacts are provided by H164, H166, and D177. The short motif at 164–177 (HSHPGYDCWLSNID) is the JAMM motif element. Polar residues predominate over residues 319–341 (TQRGDSTETSSFGSMFSGDNTSD). 2 disordered regions span residues 319–343 (TQRG…SDVD) and 375–399 (SSRS…CHDE).

The protein belongs to the peptidase M67A family. CSN5 subfamily. As to quaternary structure, component of a COP9 signalosome-like (CSN) complex, composed of at least RRI1/CSN5, CSN9, RRI2/CSN10, PCI8/CSN11, CSN12 and CSI1. Within this complex it probably interacts directly with CSN12. Also interacts with RPN5. A divalent metal cation serves as cofactor.

It is found in the cytoplasm. It localises to the nucleus. Its function is as follows. Catalytic component of the COP9 signalosome (CSN) complex that acts as an regulator of the ubiquitin (Ubl) conjugation pathway by mediating the deneddylation of the cullin subunit of SCF-type E3 ubiquitin-protein ligase complexes. The CSN complex is involved in the regulation of the mating pheromone response. This Saccharomyces cerevisiae (strain ATCC 204508 / S288c) (Baker's yeast) protein is COP9 signalosome complex subunit 5 (RRI1).